The primary structure comprises 180 residues: MGNFHATTIFAIHHNGKCAMAGDGQVTFGNAVVMKHTARKVRKLFQGKVLAGFAGSVADAFTLFEMFEGKLEEYNGNLQRAAVEMAKQWRGDKMLRQLEAMLIVMDETTLLLVSGTGEVIEPDDGILAIGSGGHYALAAGRALKRHASEHLTAKEIAKASLEIAGDICVYTNHNIIVEEL.

T7 is an active-site residue. Na(+) contacts are provided by G165, C168, and T171.

This sequence belongs to the peptidase T1B family. HslV subfamily. As to quaternary structure, a double ring-shaped homohexamer of HslV is capped on each side by a ring-shaped HslU homohexamer. The assembly of the HslU/HslV complex is dependent on binding of ATP.

It is found in the cytoplasm. The enzyme catalyses ATP-dependent cleavage of peptide bonds with broad specificity.. With respect to regulation, allosterically activated by HslU binding. Protease subunit of a proteasome-like degradation complex believed to be a general protein degrading machinery. In Bacillus cytotoxicus (strain DSM 22905 / CIP 110041 / 391-98 / NVH 391-98), this protein is ATP-dependent protease subunit HslV.